A 729-amino-acid polypeptide reads, in one-letter code: Fatty acid oxidation complex subunit alpha (729 aa).

Residues 1 to 189 (MLYKGDTLYL…KIGLVDGVVK (189 aa)) are enoyl-CoA hydratase/isomerase. Asp296 is a substrate binding site. Positions 311 to 729 (ETPKQAAVLG…ARPVGSLKTA (419 aa)) are 3-hydroxyacyl-CoA dehydrogenase. Residues Met324, Asp343, 400–402 (VVE), Lys407, and Ser429 each bind NAD(+). His450 serves as the catalytic For 3-hydroxyacyl-CoA dehydrogenase activity. Asn453 is a binding site for NAD(+). Asn500 and Tyr660 together coordinate substrate. The interval 707–729 (TRHNEPYYPPVEPARPVGSLKTA) is disordered.

The protein in the N-terminal section; belongs to the enoyl-CoA hydratase/isomerase family. This sequence in the C-terminal section; belongs to the 3-hydroxyacyl-CoA dehydrogenase family. As to quaternary structure, heterotetramer of two alpha chains (FadB) and two beta chains (FadA).

It catalyses the reaction a (3S)-3-hydroxyacyl-CoA + NAD(+) = a 3-oxoacyl-CoA + NADH + H(+). The enzyme catalyses a (3S)-3-hydroxyacyl-CoA = a (2E)-enoyl-CoA + H2O. The catalysed reaction is a 4-saturated-(3S)-3-hydroxyacyl-CoA = a (3E)-enoyl-CoA + H2O. It carries out the reaction (3S)-3-hydroxybutanoyl-CoA = (3R)-3-hydroxybutanoyl-CoA. It catalyses the reaction a (3Z)-enoyl-CoA = a 4-saturated (2E)-enoyl-CoA. The enzyme catalyses a (3E)-enoyl-CoA = a 4-saturated (2E)-enoyl-CoA. It functions in the pathway lipid metabolism; fatty acid beta-oxidation. Involved in the aerobic and anaerobic degradation of long-chain fatty acids via beta-oxidation cycle. Catalyzes the formation of 3-oxoacyl-CoA from enoyl-CoA via L-3-hydroxyacyl-CoA. It can also use D-3-hydroxyacyl-CoA and cis-3-enoyl-CoA as substrate. This is Fatty acid oxidation complex subunit alpha from Salmonella typhi.